Consider the following 213-residue polypeptide: MNLIGYIEERFQNLELIPSIYNQWGTGIHFCLGENIYQLKANEELNLKMFRIVYEQTSIIFNELFEQNDDIFLVTNMYKHKKKEKCIRKLKVYQPFLKCKNHLNQIMVKTYPYPFEINKAEEYEMQQFSLLCKPRDLRVTELLKAASNEDFPQKPKFGGYSIDYPDVFFVNITKDIIFFIYDDRGCEVIAHDFKRIRPLYEKYHDWVEEYKCM.

This is an uncharacterized protein from Bacillus subtilis (strain 168).